The chain runs to 226 residues: UPF0758 protein SPD_0975 (226 aa).

Positions 103-225 (SILSSQKLAK…YFSYREKTDL (123 aa)) constitute an MPN domain. Residues histidine 174, histidine 176, and aspartate 187 each coordinate Zn(2+). The JAMM motif motif lies at 174–187 (HNHPSGAVAPSQND).

This sequence belongs to the UPF0758 family.

This chain is UPF0758 protein SPD_0975, found in Streptococcus pneumoniae serotype 2 (strain D39 / NCTC 7466).